A 557-amino-acid chain; its full sequence is Urocanate hydratase (557 aa).

The tract at residues 1–20 is disordered; the sequence is MSNPRHNEREVRSPRGDELN. Residues 52–53, glutamine 130, 176–178, glutamate 196, arginine 201, 242–243, 263–267, 273–274, and tyrosine 322 each bind NAD(+); these read GG, GMG, NA, QTSAH, and YL. The active site involves cysteine 410. Position 492 (glycine 492) interacts with NAD(+).

The protein belongs to the urocanase family. NAD(+) serves as cofactor.

It localises to the cytoplasm. The catalysed reaction is 4-imidazolone-5-propanoate = trans-urocanate + H2O. It participates in amino-acid degradation; L-histidine degradation into L-glutamate; N-formimidoyl-L-glutamate from L-histidine: step 2/3. Its function is as follows. Catalyzes the conversion of urocanate to 4-imidazolone-5-propionate. The chain is Urocanate hydratase from Brucella melitensis biotype 1 (strain ATCC 23456 / CCUG 17765 / NCTC 10094 / 16M).